The primary structure comprises 479 residues: Ribulose bisphosphate carboxylase large chain (479 aa).

Positions 1–2 (MS) are excised as a propeptide. Residues asparagine 123 and threonine 173 each contribute to the substrate site. The active-site Proton acceptor is the lysine 175. Lysine 177 serves as a coordination point for substrate. 3 residues coordinate Mg(2+): lysine 201, aspartate 203, and glutamate 204. Lysine 201 is subject to N6-carboxylysine. Serine 208 carries the post-translational modification Phosphoserine. Histidine 294 (proton acceptor) is an active-site residue. Substrate-binding residues include arginine 295 and histidine 327. A Phosphothreonine modification is found at threonine 330. Serine 379 provides a ligand contact to substrate.

This sequence belongs to the RuBisCO large chain family. Type I subfamily. Heterohexadecamer of 8 large chains and 8 small chains; disulfide-linked. The disulfide link is formed within the large subunit homodimers. It depends on Mg(2+) as a cofactor. Post-translationally, the disulfide bond which can form in the large chain dimeric partners within the hexadecamer appears to be associated with oxidative stress and protein turnover.

Its subcellular location is the plastid. It is found in the chloroplast. The catalysed reaction is 2 (2R)-3-phosphoglycerate + 2 H(+) = D-ribulose 1,5-bisphosphate + CO2 + H2O. It catalyses the reaction D-ribulose 1,5-bisphosphate + O2 = 2-phosphoglycolate + (2R)-3-phosphoglycerate + 2 H(+). Functionally, ruBisCO catalyzes two reactions: the carboxylation of D-ribulose 1,5-bisphosphate, the primary event in carbon dioxide fixation, as well as the oxidative fragmentation of the pentose substrate in the photorespiration process. Both reactions occur simultaneously and in competition at the same active site. The sequence is that of Ribulose bisphosphate carboxylase large chain from Capsella bursa-pastoris (Shepherd's purse).